A 55-amino-acid chain; its full sequence is ATP synthase protein 8 (55 aa).

The helical transmembrane segment at 4–24 (LDPAPWFSMLTVSWLIIFLLI) threads the bilayer.

It belongs to the ATPase protein 8 family. In terms of assembly, F-type ATPases have 2 components, CF(1) - the catalytic core - and CF(0) - the membrane proton channel.

The protein localises to the mitochondrion membrane. Its function is as follows. Mitochondrial membrane ATP synthase (F(1)F(0) ATP synthase or Complex V) produces ATP from ADP in the presence of a proton gradient across the membrane which is generated by electron transport complexes of the respiratory chain. F-type ATPases consist of two structural domains, F(1) - containing the extramembraneous catalytic core and F(0) - containing the membrane proton channel, linked together by a central stalk and a peripheral stalk. During catalysis, ATP synthesis in the catalytic domain of F(1) is coupled via a rotary mechanism of the central stalk subunits to proton translocation. Part of the complex F(0) domain. Minor subunit located with subunit a in the membrane. The protein is ATP synthase protein 8 (MT-ATP8) of Petromyzon marinus (Sea lamprey).